The chain runs to 819 residues: Protein kinase C-binding protein NELL2 (819 aa).

The N-terminal stretch at Met-1–Gly-24 is a signal peptide. N-linked (GlcNAc...) asparagine glycans are attached at residues Asn-56, Asn-228, Asn-296, and Asn-301. The Laminin G-like domain maps to Pro-67–Cys-231. The region spanning Arg-275–Lys-334 is the VWFC 1 domain. The region spanning Gly-400–Glu-442 is the EGF-like 1 domain. Cystine bridges form between Cys-404/Cys-416, Cys-410/Cys-425, and Cys-427/Cys-441. Residues Asp-443, Ile-444, and Glu-446 each coordinate Ca(2+). One can recognise an EGF-like 2; calcium-binding domain in the interval Asp-443–Thr-484. 9 cysteine pairs are disulfide-bonded: Cys-447–Cys-460, Cys-454–Cys-469, Cys-471–Cys-483, Cys-489–Cys-502, Cys-496–Cys-511, Cys-513–Cys-524, Cys-528–Cys-538, Cys-532–Cys-544, and Cys-546–Cys-555. Ca(2+) is bound by residues Asn-462, Thr-463, and Ser-466. The EGF-like 3; calcium-binding domain maps to Glu-485 to Lys-525. N-linked (GlcNAc...) asparagine glycosylation occurs at Asn-520. The region spanning Ala-526–Glu-556 is the EGF-like 4 domain. A glycan (O-linked (GlcNAc...) threonine) is linked at Thr-551. 3 residues coordinate Ca(2+): Asp-558, Ile-559, and Glu-561. The region spanning Asp-558–Glu-604 is the EGF-like 5; calcium-binding domain. Cystine bridges form between Cys-562–Cys-575, Cys-569–Cys-584, and Cys-586–Cys-603. Residues Asn-577, Leu-578, and Trp-581 each coordinate Ca(2+). Ca(2+) is bound by residues Asp-605, Ile-606, and Glu-608. The EGF-like 6; calcium-binding domain maps to Asp-605 to Thr-640. Cystine bridges form between Cys-609–Cys-622, Cys-616–Cys-631, and Cys-633–Cys-639. Residue Asn-618 is glycosylated (N-linked (GlcNAc...) asparagine). Residues Asn-624, Leu-625, and Gly-628 each contribute to the Ca(2+) site. Asn-638 carries N-linked (GlcNAc...) asparagine glycosylation. The 59-residue stretch at Ser-701–Val-759 folds into the VWFC 2 domain.

Homotrimer. Interacts with NICOL1; this interaction triggers epididymal differentiation. Interacts (via EGF domains) with ROBO3 (via FN domains); binding to ROBO3 induces repulsive guidance cue for commissural axons. In terms of tissue distribution, expressed in brain and testis but not in epididymis. Expressed in regions flanking the commissural axon trajectory, including the ventral horn.

It is found in the secreted. Functionally, plays multiple roles in neural tissues, regulates neuronal proliferation, survival, differentiation, polarization, as well as axon guidance and synaptic functions. Plays an important role in axon development during neuronal differentiation through the MAPK intracellular signaling pathway. Via binding to its receptor ROBO3, plays a role in axon guidance, functioning as a repulsive axon guidance cue that contributes to commissural axon guidance to the midline. Required for neuron survival through the modulation of MAPK signaling pathways too. Involved in the regulation of hypothalamic GNRH secretion and the control of puberty. Its function is as follows. Epididymal-secreted protein that signals through a ROS1-pathway to regulate the epididymal initial segment (IS) maturation, sperm maturation and male fertility. This chain is Protein kinase C-binding protein NELL2, found in Mus musculus (Mouse).